We begin with the raw amino-acid sequence, 208 residues long: NADH-ubiquinone oxidoreductase chain 4 (208 aa).

Transmembrane regions (helical) follow at residues 23-43 (VWIN…NLLW), 60-80 (PLSA…LLAS), 93-113 (KLYI…FSAN), 114-134 (ELIM…IIIT), 147-167 (IYFL…LIYI), and 185-205 (PINQ…AFMV).

This sequence belongs to the complex I subunit 4 family. Core subunit of respiratory chain NADH dehydrogenase (Complex I) which is composed of 45 different subunits.

It localises to the mitochondrion inner membrane. It carries out the reaction a ubiquinone + NADH + 5 H(+)(in) = a ubiquinol + NAD(+) + 4 H(+)(out). Functionally, core subunit of the mitochondrial membrane respiratory chain NADH dehydrogenase (Complex I) which catalyzes electron transfer from NADH through the respiratory chain, using ubiquinone as an electron acceptor. Essential for the catalytic activity and assembly of complex I. This is NADH-ubiquinone oxidoreductase chain 4 (MT-ND4) from Microtus pennsylvanicus (Meadow vole).